A 1394-amino-acid chain; its full sequence is Leucine-rich PPR motif-containing protein, mitochondrial (1394 aa).

A mitochondrion-targeting transit peptide spans 1 to 59 (MAALLRSARWLLRAGAAPRLPLSLRLLPGGPGRLHAASYLPAARAGPVAGGLLSPARLY). PPR repeat units follow at residues 126 to 160 (LLRS…GAVY), 161 to 195 (DVSH…NIQP), 196 to 230 (NRVT…DLPV), 231 to 265 (TEAV…GIEP), 266 to 300 (GPDT…ELHL), 301 to 335 (MDRD…RRYI), 403 to 437 (HSFP…GFPI), and 438 to 472 (RPHY…GVHP). 3 positions are modified to N6-acetyllysine: lysine 155, lysine 187, and lysine 226. The residue at position 292 (lysine 292) is an N6-acetyllysine. Residues lysine 463 and lysine 613 each carry the N6-acetyllysine modification. PPR repeat units follow at residues 678–709 (IRDV…ESDM), 710–746 (VTGG…SAVL), 747–784 (DTGK…IKDT), 785–820 (TALS…LAEP), 821–856 (STNI…KVLP), and 954–988 (RDQM…NVIP). The interaction with BECN1 and Aedes aegypti venom allergen-1 stretch occupies residues 712–1067 (GGYAALINLC…AKEQNIVFNA (356 aa)). N6-acetyllysine is present on residues lysine 726 and lysine 750. Phosphoserine is present on residues serine 1026, serine 1027, and serine 1029. PPR repeat units lie at residues 1031-1065 (TEPD…NIVF), 1066-1102 (NAET…GFTL), 1103-1137 (NDAA…QQTP), 1138-1175 (SRLA…IGLS), 1176-1210 (KMVF…ENKV), and 1317-1351 (KEEA…NTKL). An RNA-binding region spans residues 1121 to 1394 (KEAVTTLKTV…QLRKLRENSS (274 aa)). Residue threonine 1136 is modified to Phosphothreonine. Serine 1138 carries the post-translational modification Phosphoserine.

In terms of assembly, component of mRNP complexes associated with HNRPA1. Component of the complex, at least composed of LRPPRC, BECN1 and BCL2; the interactions prevent BECN1 from forming an autophagy-inducing complex with PIK3C3. Interacts with CECR2, HEBP2, MAP1S and UXT. Interacts with PPARGC1A. Interacts with FOXO1. Interacts (via N-terminus) with EIF4E; the interaction promotes association of EIF4E with 4ESE-containing mRNAs. Interacts with exportin XPO1/CRM1; interacts both alone and in complex with EIF4E and 4ESE-containing mRNAs to form an EIF4E-dependent mRNA export complex. Interacts with importin IPO8; the interaction occurs when LRPPRC is in its RNA-free form and returns LRPPRC to the nucleus for further export rounds. Interacts with BECN1. Interacts with Aedes aegypti venom allergen-1; the interaction interrupts BECN1 and LRPPRC association. In terms of tissue distribution, expressed ubiquitously. Expression is highest in heart, skeletal muscle, kidney and liver, intermediate in brain, non-mucosal colon, spleen and placenta, and lowest in small intestine, thymus, lung and peripheral blood leukocytes.

Its subcellular location is the mitochondrion. The protein resides in the nucleus. The protein localises to the nucleoplasm. It localises to the nucleus inner membrane. It is found in the nucleus outer membrane. May play a role in RNA metabolism in both nuclei and mitochondria. In the nucleus binds to HNRPA1-associated poly(A) mRNAs and is part of nmRNP complexes at late stages of mRNA maturation which are possibly associated with nuclear mRNA export. Positively modulates nuclear export of mRNAs containing the EIF4E sensitivity element (4ESE) by binding simultaneously to both EIF4E and the 4ESE and acting as a platform for assembly for the RNA export complex. Also binds to exportin XPO1/CRM1 to engage the nuclear pore and traffic the bound mRNAs to the cytoplasm. May bind mature mRNA in the nucleus outer membrane. In mitochondria binds to poly(A) mRNA. Plays a role in translation or stability of mitochondrially encoded cytochrome c oxidase (COX) subunits. May be involved in transcription regulation. Cooperates with PPARGC1A to regulate certain mitochondrially encoded genes and gluconeogenic genes and may regulate docking of PPARGC1A to transcription factors. Seems to be involved in the transcription regulation of the multidrug-related genes MDR1 and MVP. Part of a nuclear factor that binds to the invMED1 element of MDR1 and MVP gene promoters. Binds single-stranded DNA. Required for maintaining mitochondrial potential. Suppresses the initiation of basal levels of autophagy and mitophagy by sustaining BCL2 levels. In Homo sapiens (Human), this protein is Leucine-rich PPR motif-containing protein, mitochondrial (LRPPRC).